We begin with the raw amino-acid sequence, 267 residues long: Type II pantothenate kinase (267 aa).

6–13 (DAGGTLIK) is an ATP binding site. The active-site Proton acceptor is the E70. ATP contacts are provided by residues T99, 121–125 (GGMIQ), Y137, and S225.

The protein belongs to the type II pantothenate kinase family. As to quaternary structure, homodimer.

Its subcellular location is the cytoplasm. The enzyme catalyses (R)-pantothenate + ATP = (R)-4'-phosphopantothenate + ADP + H(+). Its pathway is cofactor biosynthesis; coenzyme A biosynthesis; CoA from (R)-pantothenate: step 1/5. Its function is as follows. Catalyzes the phosphorylation of pantothenate (Pan), the first step in CoA biosynthesis. In Staphylococcus aureus (strain Mu50 / ATCC 700699), this protein is Type II pantothenate kinase.